Reading from the N-terminus, the 101-residue chain is Small ribosomal subunit protein uS14 (101 aa).

The protein belongs to the universal ribosomal protein uS14 family. Part of the 30S ribosomal subunit. Contacts proteins S3 and S10.

In terms of biological role, binds 16S rRNA, required for the assembly of 30S particles and may also be responsible for determining the conformation of the 16S rRNA at the A site. This is Small ribosomal subunit protein uS14 from Erythrobacter litoralis (strain HTCC2594).